The following is a 417-amino-acid chain: NADH-quinone oxidoreductase subunit D (417 aa).

The protein belongs to the complex I 49 kDa subunit family. NDH-1 is composed of 14 different subunits. Subunits NuoB, C, D, E, F, and G constitute the peripheral sector of the complex.

It localises to the cell inner membrane. It carries out the reaction a quinone + NADH + 5 H(+)(in) = a quinol + NAD(+) + 4 H(+)(out). Its function is as follows. NDH-1 shuttles electrons from NADH, via FMN and iron-sulfur (Fe-S) centers, to quinones in the respiratory chain. The immediate electron acceptor for the enzyme in this species is believed to be ubiquinone. Couples the redox reaction to proton translocation (for every two electrons transferred, four hydrogen ions are translocated across the cytoplasmic membrane), and thus conserves the redox energy in a proton gradient. The chain is NADH-quinone oxidoreductase subunit D from Paraburkholderia phymatum (strain DSM 17167 / CIP 108236 / LMG 21445 / STM815) (Burkholderia phymatum).